Reading from the N-terminus, the 302-residue chain is Beta-1,2-mannobiose phosphorylase (302 aa).

Belongs to the glycosyl hydrolase 130 family. As to quaternary structure, monomer.

The catalysed reaction is beta-D-mannopyranosyl-(1-&gt;2)-D-mannopyranose + phosphate = alpha-D-mannose 1-phosphate + D-mannose. It participates in nucleotide-sugar biosynthesis; GDP-alpha-D-mannose biosynthesis. Its function is as follows. Probably involved in a salvage pathway for GDP-D-mannose biosynthesis. Catalyzes the reversible phosphorolysis of 1,2-beta-oligomannan. In phosphorolytic reactions, prefers beta-1,2-mannobiose (beta-1,2-Man2) as substrate. Produces alpha-D-mannose 1-phosphate, which is the precursor of GDP-D-mannose. The polypeptide is Beta-1,2-mannobiose phosphorylase (Thermoanaerobacter sp. (strain X514)).